We begin with the raw amino-acid sequence, 444 residues long: Homogentisate 1,2-dioxygenase (444 aa).

The active-site Proton acceptor is His298. Fe cation contacts are provided by His341 and Glu347. Residues Tyr356 and His377 each contribute to the homogentisate site. Position 377 (His377) interacts with Fe cation.

This sequence belongs to the homogentisate dioxygenase family. As to quaternary structure, hexamer; dimer of trimers. The cofactor is Fe cation.

The catalysed reaction is homogentisate + O2 = 4-maleylacetoacetate + H(+). The protein operates within amino-acid degradation; L-phenylalanine degradation; acetoacetate and fumarate from L-phenylalanine: step 4/6. Its function is as follows. Involved in the catabolism of homogentisate (2,5-dihydroxyphenylacetate or 2,5-OH-PhAc), a central intermediate in the degradation of phenylalanine and tyrosine. Catalyzes the oxidative ring cleavage of the aromatic ring of homogentisate to yield maleylacetoacetate. The chain is Homogentisate 1,2-dioxygenase from Burkholderia orbicola (strain MC0-3).